Reading from the N-terminus, the 506-residue chain is Cobyric acid synthase (506 aa).

One can recognise a GATase cobBQ-type domain in the interval 251-448; sequence DITIAIVQLP…LHGLFDSDAF (198 aa). C332 functions as the Nucleophile in the catalytic mechanism. The active site involves H440.

It belongs to the CobB/CobQ family. CobQ subfamily.

The protein operates within cofactor biosynthesis; adenosylcobalamin biosynthesis. Catalyzes amidations at positions B, D, E, and G on adenosylcobyrinic A,C-diamide. NH(2) groups are provided by glutamine, and one molecule of ATP is hydrogenolyzed for each amidation. The chain is Cobyric acid synthase from Salmonella agona (strain SL483).